Reading from the N-terminus, the 513-residue chain is UDP-N-acetylmuramyl-tripeptide synthetase (513 aa).

Ser38 contributes to the UDP-N-acetyl-alpha-D-muramoyl-L-alanyl-D-glutamate binding site. Residue 115–121 coordinates ATP; that stretch reads GTKGKTT. UDP-N-acetyl-alpha-D-muramoyl-L-alanyl-D-glutamate is bound by residues 161 to 162, Ser188, and Arg196; that span reads TT. Residue Lys230 is modified to N6-carboxylysine.

It belongs to the MurCDEF family. MurE subfamily. In terms of processing, carboxylation is probably crucial for Mg(2+) binding and, consequently, for the gamma-phosphate positioning of ATP.

It is found in the cytoplasm. Its pathway is cell wall biogenesis; peptidoglycan biosynthesis. Catalyzes the addition of an amino acid to the nucleotide precursor UDP-N-acetylmuramoyl-L-alanyl-D-glutamate (UMAG) in the biosynthesis of bacterial cell-wall peptidoglycan. The sequence is that of UDP-N-acetylmuramyl-tripeptide synthetase from Latilactobacillus sakei subsp. sakei (strain 23K) (Lactobacillus sakei subsp. sakei).